Consider the following 217-residue polypeptide: Large ribosomal subunit protein uL4c (217 aa).

The interval 51-85 (HRNRNAHTQTRGEVSGGGRKPWKQKGTGRARAGSN) is disordered.

Belongs to the universal ribosomal protein uL4 family. As to quaternary structure, part of the 50S ribosomal subunit.

The protein localises to the plastid. Its subcellular location is the chloroplast. Probably binds the 23S rRNA. This chain is Large ribosomal subunit protein uL4c (rpl4), found in Gracilaria tenuistipitata var. liui (Red alga).